We begin with the raw amino-acid sequence, 215 residues long: Small ribosomal subunit protein uS3 (215 aa).

The KH type-2 domain occupies Val39 to Arg107.

The protein belongs to the universal ribosomal protein uS3 family. In terms of assembly, part of the 30S ribosomal subunit. Forms a tight complex with proteins S10 and S14.

Binds the lower part of the 30S subunit head. Binds mRNA in the 70S ribosome, positioning it for translation. The polypeptide is Small ribosomal subunit protein uS3 (Nitrosomonas europaea (strain ATCC 19718 / CIP 103999 / KCTC 2705 / NBRC 14298)).